A 299-amino-acid chain; its full sequence is Mitochondrial 2-oxodicarboxylate carrier (299 aa).

3 Solcar repeats span residues 11 to 100 (REAS…YKKL), 107 to 196 (SPAL…VKNM), and 205 to 294 (LEFW…TYSW). 6 consecutive transmembrane segments (helical) span residues 17–37 (IVAG…LDVV), 70–89 (FGFY…KRAV), 113–133 (AIAG…FEVV), 167–187 (GLNK…MVYF), 205–225 (LEFW…SVIN), and 277–297 (LGPG…WLQE).

The protein belongs to the mitochondrial carrier (TC 2.A.29) family. Expressed in placenta, gall bladder and colon.

The protein localises to the mitochondrion inner membrane. It carries out the reaction 2-oxoadipate(in) + 2-oxoglutarate(out) = 2-oxoadipate(out) + 2-oxoglutarate(in). The catalysed reaction is hexanedioate(in) + 2-oxoglutarate(out) = hexanedioate(out) + 2-oxoglutarate(in). The enzyme catalyses L-2-aminoadipate(in) + 2-oxoglutarate(out) = L-2-aminoadipate(out) + 2-oxoglutarate(in). It catalyses the reaction glutarate(in) + 2-oxoglutarate(out) = glutarate(out) + 2-oxoglutarate(in). It carries out the reaction 2-oxoheptanedioate(in) + 2-oxoglutarate(out) = 2-oxoheptanedioate(out) + 2-oxoglutarate(in). The catalysed reaction is heptanedioate(in) + 2-oxoglutarate(out) = heptanedioate(out) + 2-oxoglutarate(in). The enzyme catalyses citrate(in) + 2-oxoglutarate(out) = citrate(out) + 2-oxoglutarate(in). In terms of biological role, transports dicarboxylates across the inner membranes of mitochondria by a counter-exchange mechanism. Can transport 2-oxoadipate (2-oxohexanedioate), 2-oxoglutarate, adipate (hexanedioate), glutarate, and to a lesser extent, pimelate (heptanedioate), 2-oxopimelate (2-oxoheptanedioate), 2-aminoadipate (2-aminohexanedioate), oxaloacetate, and citrate. Plays a central role in catabolism of lysine, hydroxylysine, and tryptophan, by transporting common metabolite intermediates (such as 2-oxoadipate) into the mitochondria, where it is converted into acetyl-CoA and can enter the citric acid (TCA) cycle. The sequence is that of Mitochondrial 2-oxodicarboxylate carrier (SLC25A21) from Homo sapiens (Human).